The chain runs to 190 residues: Peptidyl-tRNA hydrolase (190 aa).

A tRNA-binding site is contributed by phenylalanine 14. Histidine 19 acts as the Proton acceptor in catalysis. TRNA-binding residues include methionine 64, asparagine 66, and asparagine 112.

This sequence belongs to the PTH family. In terms of assembly, monomer.

The protein resides in the cytoplasm. It catalyses the reaction an N-acyl-L-alpha-aminoacyl-tRNA + H2O = an N-acyl-L-amino acid + a tRNA + H(+). Its function is as follows. Hydrolyzes ribosome-free peptidyl-tRNAs (with 1 or more amino acids incorporated), which drop off the ribosome during protein synthesis, or as a result of ribosome stalling. Catalyzes the release of premature peptidyl moieties from peptidyl-tRNA molecules trapped in stalled 50S ribosomal subunits, and thus maintains levels of free tRNAs and 50S ribosomes. This chain is Peptidyl-tRNA hydrolase, found in Staphylococcus aureus (strain bovine RF122 / ET3-1).